The following is a 411-amino-acid chain: GPI-anchor transamidase (411 aa).

The N-terminal stretch at 1 to 22 (MRIAMHLPLLLLYIFLLPLSGA) is a signal peptide. Residues 23–376 (NNTDAAHEVI…DIDSNECFFT (354 aa)) are Lumenal-facing. Residues His157 and Cys199 contribute to the active site. N-linked (GlcNAc...) asparagine glycans are attached at residues Asn256 and Asn346. The chain crosses the membrane as a helical span at residues 377 to 397 (SFKQSATIILALIVTILWFML). Over 398-411 (RGNTAKATYDLYTN) the chain is Cytoplasmic.

The protein belongs to the peptidase C13 family. As to quaternary structure, forms a complex with CDC91, GPI16, GPI17 and GAA1. The disulfide bond between GPI8 and GPI16 is important for normal enzyme activity.

The protein localises to the endoplasmic reticulum membrane. It participates in glycolipid biosynthesis; glycosylphosphatidylinositol-anchor biosynthesis. Its function is as follows. Mediates GPI anchoring in the endoplasmic reticulum, by replacing a protein's C-terminal GPI attachment signal peptide with a pre-assembled GPI. During this transamidation reaction, the GPI transamidase forms a carbonyl intermediate with the substrate protein. The polypeptide is GPI-anchor transamidase (GPI8) (Saccharomyces cerevisiae (strain ATCC 204508 / S288c) (Baker's yeast)).